The primary structure comprises 324 residues: Phospho-N-acetylmuramoyl-pentapeptide-transferase (324 aa).

A run of 10 helical transmembrane segments spans residues threonine 9–valine 29, threonine 53–isoleucine 73, valine 77–leucine 97, phenylalanine 117–alanine 137, isoleucine 147–serine 167, leucine 176–phenylalanine 196, methionine 201–asparagine 221, isoleucine 227–leucine 247, leucine 253–phenylalanine 273, and valine 304–phenylalanine 324.

This sequence belongs to the glycosyltransferase 4 family. MraY subfamily. Mg(2+) is required as a cofactor.

The protein localises to the cell membrane. The enzyme catalyses UDP-N-acetyl-alpha-D-muramoyl-L-alanyl-gamma-D-glutamyl-meso-2,6-diaminopimeloyl-D-alanyl-D-alanine + di-trans,octa-cis-undecaprenyl phosphate = di-trans,octa-cis-undecaprenyl diphospho-N-acetyl-alpha-D-muramoyl-L-alanyl-D-glutamyl-meso-2,6-diaminopimeloyl-D-alanyl-D-alanine + UMP. The protein operates within cell wall biogenesis; peptidoglycan biosynthesis. Catalyzes the initial step of the lipid cycle reactions in the biosynthesis of the cell wall peptidoglycan: transfers peptidoglycan precursor phospho-MurNAc-pentapeptide from UDP-MurNAc-pentapeptide onto the lipid carrier undecaprenyl phosphate, yielding undecaprenyl-pyrophosphoryl-MurNAc-pentapeptide, known as lipid I. This chain is Phospho-N-acetylmuramoyl-pentapeptide-transferase, found in Listeria monocytogenes serotype 4b (strain CLIP80459).